The following is a 183-amino-acid chain: Large ribosomal subunit protein uL6 (183 aa).

This sequence belongs to the universal ribosomal protein uL6 family. In terms of assembly, part of the 50S ribosomal subunit.

In terms of biological role, this protein binds to the 23S rRNA, and is important in its secondary structure. It is located near the subunit interface in the base of the L7/L12 stalk, and near the tRNA binding site of the peptidyltransferase center. The sequence is that of Large ribosomal subunit protein uL6 from Chlamydia muridarum (strain MoPn / Nigg).